Consider the following 71-residue polypeptide: Large ribosomal subunit protein uL29 (71 aa).

The protein belongs to the universal ribosomal protein uL29 family.

This chain is Large ribosomal subunit protein uL29, found in Rickettsia akari (strain Hartford).